A 1035-amino-acid chain; its full sequence is Cell-division control histidine kinase PdhS (1035 aa).

The tract at residues 1–613 (MSGSYPFIDI…HADGSEEPVD (613 aa)) is important for polar localization. Positions 500-533 (QGLANTRAESETPVSETSSIEPVEPTPPVKTRSE) are disordered. The tract at residues 614–1035 (AHLNAIAWRG…VFPPTRVLAD (422 aa)) is interaction with DivK. Residues 659–730 (HVEELKTILD…YLHGLSGNGV (72 aa)) form the PAS domain. The Histidine kinase domain maps to 802-1031 (RISHEIRTPL…VVEIVFPPTR (230 aa)). Position 805 is a phosphohistidine; by autocatalysis (histidine 805).

As to quaternary structure, interacts with DivK.

The protein resides in the cytoplasm. It carries out the reaction ATP + protein L-histidine = ADP + protein N-phospho-L-histidine.. Functions as a polar differentiation marker. Essential protein that, by localizing in the old pole of dividing cells, controls cell division and maturation, probably through control of DivK phosphorylation status and cellular distribution, which in turn regulates CtrA, a transcriptional regulator of the minB operon. The asymmetrical localization of this protein is probably required for cells to enter a new division cycle. The sequence is that of Cell-division control histidine kinase PdhS (pdhS) from Brucella melitensis biotype 1 (strain ATCC 23456 / CCUG 17765 / NCTC 10094 / 16M).